The sequence spans 153 residues: Small ribosomal subunit protein uS19 (153 aa).

The protein belongs to the universal ribosomal protein uS19 family.

The chain is Small ribosomal subunit protein uS19 (RPS15) from Elaeis oleifera (American oil palm).